The primary structure comprises 81 residues: Photosystem I iron-sulfur center (81 aa).

2 4Fe-4S ferredoxin-type domains span residues 2–31 (SHSV…MVPW) and 39–68 (IASS…IRVY). Residues cysteine 11, cysteine 14, cysteine 17, cysteine 21, cysteine 48, cysteine 51, cysteine 54, and cysteine 58 each contribute to the [4Fe-4S] cluster site.

As to quaternary structure, the G.violaceus PSI reaction center is composed of one copy each of PsaA,B,C,D,E,F,L,M and Z, and forms trimeric complexes. Requires [4Fe-4S] cluster as cofactor.

Its subcellular location is the cell inner membrane. The catalysed reaction is reduced [plastocyanin] + hnu + oxidized [2Fe-2S]-[ferredoxin] = oxidized [plastocyanin] + reduced [2Fe-2S]-[ferredoxin]. Apoprotein for the two 4Fe-4S centers FA and FB of photosystem I (PSI); essential for photochemical activity. FB is the terminal electron acceptor of PSI, donating electrons to ferredoxin. The C-terminus interacts with PsaA/B/D and helps assemble the protein into the PSI complex. Required for binding of PsaD and PsaE to PSI. PSI is a plastocyanin/cytochrome c6-ferredoxin oxidoreductase, converting photonic excitation into a charge separation, which transfers an electron from the donor P700 chlorophyll pair to the spectroscopically characterized acceptors A0, A1, FX, FA and FB in turn. This chain is Photosystem I iron-sulfur center, found in Gloeobacter violaceus (strain ATCC 29082 / PCC 7421).